A 64-amino-acid polypeptide reads, in one-letter code: Phi-buthitoxin-Hj1a (64 aa).

The signal sequence occupies residues 1 to 18 (MNSFVVVLLLFIAILCNA). 3 disulfides stabilise this stretch: Cys29-Cys43, Cys36-Cys49, and Cys42-Cys58.

Belongs to the scorpion calcin-like family. Expressed by the venom gland.

It is found in the secreted. May increase intracellular calcium release through the activation of nuclear inositol 1,4,5-trisphosphate receptors (ITPR) of cardiomyocytes, thereby causing an increase in the contraction frequency of these cells. This is Phi-buthitoxin-Hj1a from Hottentotta judaicus (Black scorpion).